The primary structure comprises 347 residues: tRNA N6-adenosine threonylcarbamoyltransferase (347 aa).

Fe cation is bound by residues His-110 and His-114. Substrate is bound by residues 133-137 (VVSGG), Asp-168, Gly-181, Asp-185, and Asn-277. Residue Asp-305 coordinates Fe cation.

The protein belongs to the KAE1 / TsaD family. Fe(2+) is required as a cofactor.

The protein localises to the cytoplasm. It carries out the reaction L-threonylcarbamoyladenylate + adenosine(37) in tRNA = N(6)-L-threonylcarbamoyladenosine(37) in tRNA + AMP + H(+). Its function is as follows. Required for the formation of a threonylcarbamoyl group on adenosine at position 37 (t(6)A37) in tRNAs that read codons beginning with adenine. Is involved in the transfer of the threonylcarbamoyl moiety of threonylcarbamoyl-AMP (TC-AMP) to the N6 group of A37, together with TsaE and TsaB. TsaD likely plays a direct catalytic role in this reaction. The chain is tRNA N6-adenosine threonylcarbamoyltransferase from Kineococcus radiotolerans (strain ATCC BAA-149 / DSM 14245 / SRS30216).